Consider the following 246-residue polypeptide: Eukaryotic translation initiation factor 6 (246 aa).

A phosphoserine; by CK1 mark is found at Ser-174 and Ser-175.

This sequence belongs to the eIF-6 family. In terms of assembly, monomer. Associates with the 60S ribosomal subunit. Phosphorylation at Ser-174 and Ser-175 promotes nuclear export.

Its subcellular location is the cytoplasm. The protein resides in the nucleus. The protein localises to the nucleolus. Functionally, binds to the 60S ribosomal subunit and prevents its association with the 40S ribosomal subunit to form the 80S initiation complex in the cytoplasm. Is also involved in ribosome biogenesis. Associates with pre-60S subunits in the nucleus and is involved in its nuclear export. The chain is Eukaryotic translation initiation factor 6 (tif-6) from Neurospora crassa (strain ATCC 24698 / 74-OR23-1A / CBS 708.71 / DSM 1257 / FGSC 987).